The chain runs to 776 residues: 3-isopropylmalate dehydratase (776 aa).

Positions 357, 418, and 421 each coordinate [4Fe-4S] cluster. The span at 482–493 (SAPKVEVRHDTD) shows a compositional bias: basic and acidic residues. Disordered regions lie at residues 482 to 518 (SAPK…SDVA) and 525 to 544 (DIPV…SADA). Positions 527–538 (PVSNSSTQSPGS) are enriched in polar residues.

This sequence belongs to the aconitase/IPM isomerase family. Monomer. The cofactor is [4Fe-4S] cluster.

The catalysed reaction is (2R,3S)-3-isopropylmalate = (2S)-2-isopropylmalate. It participates in amino-acid biosynthesis; L-leucine biosynthesis; L-leucine from 3-methyl-2-oxobutanoate: step 2/4. Functionally, catalyzes the isomerization between 2-isopropylmalate and 3-isopropylmalate, via the formation of 2-isopropylmaleate. The chain is 3-isopropylmalate dehydratase (LEU1) from Eremothecium gossypii (strain ATCC 10895 / CBS 109.51 / FGSC 9923 / NRRL Y-1056) (Yeast).